Reading from the N-terminus, the 360-residue chain is sn-glycerol-3-phosphate import ATP-binding protein UgpC (360 aa).

The ABC transporter domain maps to 4-235 (LSLKGVRKSY…PATTFVASFI (232 aa)). 37–44 (GPSGCGKS) is an ATP binding site.

This sequence belongs to the ABC transporter superfamily. sn-glycerol-3-phosphate importer (TC 3.A.1.1.3) family. In terms of assembly, the complex is composed of two ATP-binding proteins (UgpC), two transmembrane proteins (UgpA and UgpE) and a solute-binding protein (UgpB).

It is found in the cell inner membrane. It carries out the reaction sn-glycerol 3-phosphate(out) + ATP + H2O = sn-glycerol 3-phosphate(in) + ADP + phosphate + H(+). Its function is as follows. Part of the ABC transporter complex UgpBAEC involved in sn-glycerol-3-phosphate (G3P) import. Responsible for energy coupling to the transport system. In Burkholderia pseudomallei (strain 1710b), this protein is sn-glycerol-3-phosphate import ATP-binding protein UgpC.